Consider the following 124-residue polypeptide: MIRRSPLVAVILFVAITHVVLALDDATRIDSSEIVPSEPTRRTRVSPHYISSGGSKRSLRQQAFRPVAYLKNKLNWFLSRFFGTPTDAFTQMNSPRSSRIANIFRKIYMHTAKDDEYFSRLRSV.

The first 22 residues, 1-22 (MIRRSPLVAVILFVAITHVVLA), serve as a signal peptide directing secretion. Residues 57–60 (RSLR) carry the RxLR motif.

It belongs to the RxLR effector family.

It localises to the secreted. The protein resides in the host cytoplasm. It is found in the host nucleus. In terms of biological role, effector that acts as a broad suppressor of cell death to interrupt plant immunity. Inhibits cell death induced by cell death-inducing proteins, including the PAMP elicitor INF1 from P.infestans. The polypeptide is Secreted RxLR effector protein 49 (Plasmopara viticola (Downy mildew of grapevine)).